A 132-amino-acid chain; its full sequence is MANFVGSWKLEQSENMDAVLQKLGINVIKRKLITSSKPEITFTLEGNKMTMKTVSALKTTVISFTFGEEFKEETADGRTVMTTFTKDSDSKISQVQKCPENTTHVVREVTGGKMIATVTVGDVKAVNNYHKV.

This sequence belongs to the calycin superfamily. Fatty-acid binding protein (FABP) family.

The polypeptide is Fatty acid-binding protein type 3 (Fasciola hepatica (Liver fluke)).